The primary structure comprises 370 residues: DNA primase large subunit PriL (370 aa).

Residues Cys268, Cys341, Cys350, and Cys354 each coordinate [4Fe-4S] cluster.

This sequence belongs to the eukaryotic-type primase large subunit family. In terms of assembly, heterodimer of a small subunit (PriS) and a large subunit (PriL). [4Fe-4S] cluster is required as a cofactor.

Regulatory subunit of DNA primase, an RNA polymerase that catalyzes the synthesis of short RNA molecules used as primers for DNA polymerase during DNA replication. Stabilizes and modulates the activity of the small subunit, increasing the rate of DNA synthesis, and conferring RNA synthesis capability. The DNA polymerase activity may enable DNA primase to also catalyze primer extension after primer synthesis. May also play a role in DNA repair. This chain is DNA primase large subunit PriL, found in Archaeoglobus fulgidus (strain ATCC 49558 / DSM 4304 / JCM 9628 / NBRC 100126 / VC-16).